The chain runs to 384 residues: Movement protein TGB1 (384 aa).

A disordered region spans residues 1 to 36; that stretch reads MVQVQRRTGGDKGAKGNRASSAPVRSRRMTQDDWSR. The 151-residue stretch at 88-238 folds into the (+)RNA virus helicase ATP-binding domain; that stretch reads GKNCDLTCNA…NYNFPIIAEC (151 aa). An ATP-binding site is contributed by 123–130; the sequence is GAPGVGKS. The (+)RNA virus helicase C-terminal domain maps to 239–384; the sequence is YASRRFGKAT…CTGDTFCEDR (146 aa).

This sequence belongs to the virgaviridae/benyvirus TGB1 movement protein family. In terms of assembly, homooligomer. Interacts with movement protein TGB3.

The protein resides in the host cell junction. It is found in the host plasmodesma. Transports viral genome to neighboring plant cells directly through plasmodesmata, without any budding. The movement protein allows efficient cell to cell propagation, by bypassing the host cell wall barrier. Engages in homologous interactions leading to the formation of a ribonucleoprotein complex containing viral genomic and messenger RNAs (vRNPs). TGBp2 and TGBp3 are necessary for intracellular delivery of TGBp1-containing vRNPs to plasmodesmata. The polypeptide is Movement protein TGB1 (Beet necrotic yellow vein virus (isolate Japan/S) (BNYVV)).